We begin with the raw amino-acid sequence, 151 residues long: Deoxyuridine 5'-triphosphate nucleotidohydrolase (151 aa).

A Mg(2+)-binding site is contributed by R28. Residues 72 to 74 (PRS), 86 to 89 (GVID), Y92, G97, I99, and R115 contribute to the dUTP site.

This sequence belongs to the dUTPase family. Mg(2+) is required as a cofactor.

The enzyme catalyses dUTP + H2O = dUMP + diphosphate + H(+). This enzyme is involved in nucleotide metabolism: it produces dUMP, the immediate precursor of thymidine nucleotides and it decreases the intracellular concentration of dUTP so that uracil cannot be incorporated into DNA. The protein is Deoxyuridine 5'-triphosphate nucleotidohydrolase (OPG046) of Monkeypox virus.